The following is a 364-amino-acid chain: UDP-N-acetylglucosamine--N-acetylmuramyl-(pentapeptide) pyrophosphoryl-undecaprenol N-acetylglucosamine transferase (364 aa).

Residues 10-12 (TGG), asparagine 128, arginine 170, serine 199, isoleucine 250, and glutamine 295 contribute to the UDP-N-acetyl-alpha-D-glucosamine site.

The protein belongs to the glycosyltransferase 28 family. MurG subfamily.

It localises to the cell inner membrane. It carries out the reaction di-trans,octa-cis-undecaprenyl diphospho-N-acetyl-alpha-D-muramoyl-L-alanyl-D-glutamyl-meso-2,6-diaminopimeloyl-D-alanyl-D-alanine + UDP-N-acetyl-alpha-D-glucosamine = di-trans,octa-cis-undecaprenyl diphospho-[N-acetyl-alpha-D-glucosaminyl-(1-&gt;4)]-N-acetyl-alpha-D-muramoyl-L-alanyl-D-glutamyl-meso-2,6-diaminopimeloyl-D-alanyl-D-alanine + UDP + H(+). It functions in the pathway cell wall biogenesis; peptidoglycan biosynthesis. In terms of biological role, cell wall formation. Catalyzes the transfer of a GlcNAc subunit on undecaprenyl-pyrophosphoryl-MurNAc-pentapeptide (lipid intermediate I) to form undecaprenyl-pyrophosphoryl-MurNAc-(pentapeptide)GlcNAc (lipid intermediate II). In Chlorobaculum tepidum (strain ATCC 49652 / DSM 12025 / NBRC 103806 / TLS) (Chlorobium tepidum), this protein is UDP-N-acetylglucosamine--N-acetylmuramyl-(pentapeptide) pyrophosphoryl-undecaprenol N-acetylglucosamine transferase.